The primary structure comprises 297 residues: Bifunctional protein FolD (297 aa).

NADP(+) contacts are provided by residues 168-170, Thr-197, and Val-238; that span reads GRS.

Belongs to the tetrahydrofolate dehydrogenase/cyclohydrolase family. As to quaternary structure, homodimer.

It carries out the reaction (6R)-5,10-methylene-5,6,7,8-tetrahydrofolate + NADP(+) = (6R)-5,10-methenyltetrahydrofolate + NADPH. The catalysed reaction is (6R)-5,10-methenyltetrahydrofolate + H2O = (6R)-10-formyltetrahydrofolate + H(+). It functions in the pathway one-carbon metabolism; tetrahydrofolate interconversion. In terms of biological role, catalyzes the oxidation of 5,10-methylenetetrahydrofolate to 5,10-methenyltetrahydrofolate and then the hydrolysis of 5,10-methenyltetrahydrofolate to 10-formyltetrahydrofolate. This chain is Bifunctional protein FolD, found in Lawsonia intracellularis (strain PHE/MN1-00).